The primary structure comprises 363 residues: G-protein coupled receptor 6 (363 aa).

The Extracellular portion of the chain corresponds to 1–75 (MNASAAALNE…SGLLLSAVNP (75 aa)). N-linked (GlcNAc...) asparagine glycans are attached at residues Asn-2 and Asn-9. The interval 28–51 (AGTPDTSEWGPPAASAALGGGGGP) is disordered. Asn-52 carries an N-linked (GlcNAc...) asparagine glycan. A helical transmembrane segment spans residues 76-95 (WDVLLCVSGTVIAGENALVV). Residues 96 to 107 (ALIASTPALRTP) are Cytoplasmic-facing. A helical transmembrane segment spans residues 108 to 131 (MFVLVGSLATADLLAGCGLILHFV). Topologically, residues 132-143 (FQYVVPSETVSL) are extracellular. Residues 144–165 (LMVGFLVASFAASVSSLLAITV) traverse the membrane as a helical segment. Topologically, residues 166–186 (DRYLSLYNALTYYSRRTLLGV) are cytoplasmic. Residues 187 to 206 (HLLLAATWTVSLGLGLLPVL) form a helical membrane-spanning segment. Residues 207-231 (GWNCLADRASCSVVRPLTRSHVALL) are Extracellular-facing. A helical membrane pass occupies residues 232 to 250 (STSFFVVFGIMLHLYVRIC). Topologically, residues 251-278 (QVVWRHAHQIALQQHCLAPPHLAATRKG) are cytoplasmic. A helical transmembrane segment spans residues 279–305 (VGTLAVVLGTFGASWLPFAIYCVVGSQ). Residues 306 to 310 (EDPAI) lie on the Extracellular side of the membrane. Residues 311–332 (YTYATLLPATYNSMINPIIYAF) traverse the membrane as a helical segment. Residues 333–363 (RNQEIQRALWLLFCGCFQSKVPFRSRSPSEV) are Cytoplasmic-facing. The S-palmitoyl cysteine moiety is linked to residue Cys-346. 3 positions are modified to phosphoserine: Ser-357, Ser-359, and Ser-361.

This sequence belongs to the G-protein coupled receptor 1 family. Expressed in the brain, with a prominent distribution in striatum.

The protein resides in the cell membrane. Its function is as follows. Orphan receptor with constitutive G(s) signaling activity that activate cyclic AMP. Promotes neurite outgrowth and blocks myelin inhibition in neurons. The chain is G-protein coupled receptor 6 (Gpr6) from Rattus norvegicus (Rat).